The chain runs to 227 residues: Glial cell line-derived neurotrophic factor (227 aa).

The first 19 residues, methionine 1–serine 19, serve as a signal peptide directing secretion. Positions isoleucine 20–leucine 93 are excised as a propeptide. 2 disordered regions span residues arginine 32–alanine 61 and leucine 93–alanine 113. Intrachain disulfides connect cysteine 134/cysteine 195, cysteine 161/cysteine 224, and cysteine 165/cysteine 226. Asparagine 142 and asparagine 178 each carry an N-linked (GlcNAc...) asparagine glycan.

It belongs to the TGF-beta family. GDNF subfamily. As to quaternary structure, homodimer; disulfide-linked. Interacts with GFRA1 coreceptor and RET: forms a 2:2:2 ternary complex composed of GDNF ligand, GFRA1 and RET receptor. As to expression, from stage 22, expressed in somites and the pronephros. At stage 24 and 26, expressed in the pharyngeal arches I-III. At stage 31, expression in the eye, central nervous system and pharyngeal arches IV and V increases. Up to stage 34, expression becomes intense at the oral cavity and lateral line structures. At this stage, expression weakens in the pharyngeal arches, and increases in the epibranchial arches. Expressed in the digestive tract in stage 34 embryos.

The protein resides in the secreted. Its function is as follows. Neurotrophic factor that enhances survival and morphological differentiation of dopaminergic neurons and increases their high-affinity dopamine uptake. Acts by binding to its coreceptor, GFRA1, leading to autophosphorylation and activation of the RET receptor. The protein is Glial cell line-derived neurotrophic factor of Xenopus laevis (African clawed frog).